A 351-amino-acid polypeptide reads, in one-letter code: Anthranilate phosphoribosyltransferase (351 aa).

Residues Gly-80, 83-84 (GD), Thr-88, 90-93 (NVST), 108-116 (KHGNRSVTS), and Ser-120 each bind 5-phospho-alpha-D-ribose 1-diphosphate. Gly-80 lines the anthranilate pocket. Ser-92 provides a ligand contact to Mg(2+). Anthranilate is bound at residue Asn-111. Residue Arg-166 coordinates anthranilate. Asp-229 and Glu-230 together coordinate Mg(2+).

The protein belongs to the anthranilate phosphoribosyltransferase family. Homodimer. Requires Mg(2+) as cofactor.

It carries out the reaction N-(5-phospho-beta-D-ribosyl)anthranilate + diphosphate = 5-phospho-alpha-D-ribose 1-diphosphate + anthranilate. Its pathway is amino-acid biosynthesis; L-tryptophan biosynthesis; L-tryptophan from chorismate: step 2/5. Catalyzes the transfer of the phosphoribosyl group of 5-phosphorylribose-1-pyrophosphate (PRPP) to anthranilate to yield N-(5'-phosphoribosyl)-anthranilate (PRA). The chain is Anthranilate phosphoribosyltransferase from Prosthecochloris aestuarii (strain DSM 271 / SK 413).